The following is a 429-amino-acid chain: Adenylosuccinate synthetase (429 aa).

GTP-binding positions include 12 to 18 (GDEGKGK) and 40 to 42 (GHT). Residue Asp-13 is the Proton acceptor of the active site. Mg(2+)-binding residues include Asp-13 and Gly-40. IMP contacts are provided by residues 13–16 (DEGK), 38–41 (NAGH), Thr-129, Arg-143, Gln-223, Thr-238, and Arg-302. His-41 serves as the catalytic Proton donor. 298–304 (VVTGRKR) provides a ligand contact to substrate. GTP contacts are provided by residues Arg-304, 330–332 (KLD), and 412–414 (STS).

Belongs to the adenylosuccinate synthetase family. As to quaternary structure, homodimer. It depends on Mg(2+) as a cofactor.

It localises to the cytoplasm. The catalysed reaction is IMP + L-aspartate + GTP = N(6)-(1,2-dicarboxyethyl)-AMP + GDP + phosphate + 2 H(+). It functions in the pathway purine metabolism; AMP biosynthesis via de novo pathway; AMP from IMP: step 1/2. In terms of biological role, plays an important role in the de novo pathway of purine nucleotide biosynthesis. Catalyzes the first committed step in the biosynthesis of AMP from IMP. The sequence is that of Adenylosuccinate synthetase from Brucella suis (strain ATCC 23445 / NCTC 10510).